We begin with the raw amino-acid sequence, 334 residues long: Malate dehydrogenase, cytoplasmic (334 aa).

An N-acetylserine modification is found at Ser-2. Residues 11–17 and Asp-42 each bind NAD(+); that span reads GAAGQIA. The substrate site is built by Arg-92 and Arg-98. Asn-105 contacts NAD(+). Lys-110 bears the N6-succinyllysine mark. Gln-112 is a binding site for NAD(+). N6-acetyllysine occurs at positions 118 and 121. Position 129–131 (129–131) interacts with NAD(+); sequence VGN. Substrate is bound by residues Asn-131 and Arg-162. His-187 serves as the catalytic Proton acceptor. An N6-succinyllysine modification is found at Lys-214. At Ser-217 the chain carries Phosphoserine. Position 230 is an omega-N-methylarginine (Arg-230). Ser-241 carries the post-translational modification Phosphoserine. Lys-298 bears the N6-acetyllysine; alternate mark. Lys-298 carries the post-translational modification N6-succinyllysine; alternate. Residue Ser-309 is modified to Phosphoserine. Lys-318 is subject to N6-succinyllysine. Residues Ser-332 and Ser-333 each carry the phosphoserine modification.

The protein belongs to the LDH/MDH superfamily. MDH type 2 family. Homodimer. In terms of processing, ISGylated. Acetylation at Lys-118 dramatically enhances enzymatic activity and promotes adipogenic differentiation.

The protein localises to the cytoplasm. The protein resides in the cytosol. It carries out the reaction (S)-malate + NAD(+) = oxaloacetate + NADH + H(+). It catalyses the reaction (2R)-2-hydroxy-3-(4-hydroxyphenyl)propanoate + NAD(+) = 3-(4-hydroxyphenyl)pyruvate + NADH + H(+). The catalysed reaction is (S)-2-hydroxyglutarate + NAD(+) = 2-oxoglutarate + NADH + H(+). Its function is as follows. Catalyzes the reduction of aromatic alpha-keto acids in the presence of NADH. Plays essential roles in the malate-aspartate shuttle and the tricarboxylic acid cycle, important in mitochondrial NADH supply for oxidative phosphorylation. Catalyzes the reduction of 2-oxoglutarate to 2-hydroxyglutarate, leading to elevated reactive oxygen species (ROS). The sequence is that of Malate dehydrogenase, cytoplasmic from Homo sapiens (Human).